Reading from the N-terminus, the 232-residue chain is Ornithine carbamoyltransferase (232 aa).

Carbamoyl phosphate contacts are provided by residues Gln15, Arg39, and 66 to 69 (HPTQ). L-ornithine-binding positions include Asn99, Asp163, and 167–168 (SM). Carbamoyl phosphate contacts are provided by residues 204-207 (HCLP) and Thr232.

This sequence belongs to the aspartate/ornithine carbamoyltransferase superfamily. OTCase family.

Its subcellular location is the cytoplasm. It carries out the reaction carbamoyl phosphate + L-ornithine = L-citrulline + phosphate + H(+). It participates in amino-acid biosynthesis; L-arginine biosynthesis; L-arginine from L-ornithine and carbamoyl phosphate: step 1/3. Reversibly catalyzes the transfer of the carbamoyl group from carbamoyl phosphate (CP) to the N(epsilon) atom of ornithine (ORN) to produce L-citrulline. The chain is Ornithine carbamoyltransferase (argF) from Neisseria subflava.